We begin with the raw amino-acid sequence, 1157 residues long: MRKFTLNIFTLSLGLAVMPMVEAAPTAQQQLLEQVRLGEATHREDLVQQSLYRLELIDPNNPDVVAARFRSLLRQGDIDGAQKQLDRLSQLAPSSNAYKSSRTTMLLSTPDGRQALQQARLQATTGHAEEAVASYNKLFNGAPPEGDIAVEYWSTVAKIPARRGEAINQLKRINADAPGNTGLQNNLALLLFSSDRRDEGFAVLEQMAKSNAGREGASKIWYGQIKDMPVSDASVSALKKYLSIFSDGDSVAAAQSQLAEQQKQLADPAFRARAQGLAAVDSGMAGKAIPELQQAVRANPKDSEALGALGQAYSQKGDRANAVANLEKALALDPHSSNNDKWNSLLKVNRYWLAIQQGDAALKANNPDRAERLFQQARNVDNTDSYAVLGLGDVAMARKDYPAAERYYQQTLRMDSGNTNAVRGLANIYRQQSPEKAEAFIASLSASQRRSIDDIERSLQNDRLAQQAEALENQGKWAQAAALQRQRLALDPGSVWITYRLSQDLWQAGQRSQADTLMRNLAQQKSNDPEQVYAYGLYLSGHDQDRAALAHINSLPRAQWNSNIQELVNRLQSDQVLETANRLRESGKEAEAEAMLRQQPPSTRIDLTLADWAQQRRDYTAARAAYQNVLTREPANADAILGLTEVDIAAGDKAAARSQLAKLPATDNASLNTQRRVALAQAQLGDTAAAQRTFNKLIPQAKSQPPSMESAMVLRDGAKFEAQAGDPTQALETYKDAMVASGVTTTRPQDNDTFTRLTRNDEKDDWLKRGVRSDAADLYRQQDLNVTLEHDYWGSSGTGGYSDLKAHTTMLQVDAPYSDGRMFFRSDFVNMNVGSFSTNADGKWDDNWGTCTLQDCSGNRSQSDSGASVAVGWRNDVWSWDIGTTPMGFNVVDVVGGISYSDDIGPLGYTVNAHRRPISSSLLAFGGQKDSPSNTGKKWGGVRADGVGLSLSYDKGEANGVWASLSGDQLTGKNVEDNWRVRWMTGYYYKVINQNNRRVTIGLNNMIWHYDKDLSGYSLGQGGYYSPQEYLSFAIPVMWRERTENWSWELGASGSWSHSRTKTMPRYPLMNLIPTDWQEEAARQSNDGGSSQGFGYTARALLERRVTSNWFVGTAIDIQQAKDYAPSHFLLYVRYSAAGWQGDMDLPPQPLIPYADW.

The N-terminal stretch at 1 to 23 (MRKFTLNIFTLSLGLAVMPMVEA) is a signal peptide. TPR repeat units follow at residues 62-95 (PDVV…APSS), 112-145 (GRQA…APPE), 269-302 (AFRA…NPKD), 303-336 (SEAL…DPHS), 351-384 (YWLA…DNTD), 385-418 (SYAV…DSGN), 461-494 (NDRL…DPGS), 603-636 (TRID…EPAN), and 710-744 (SAMV…SGVT).

It belongs to the AcsC/BcsC family.

It participates in glycan metabolism; bacterial cellulose biosynthesis. In terms of biological role, required for maximal bacterial cellulose synthesis. This Escherichia coli (strain K12) protein is Cellulose synthase operon protein C (bcsC).